The sequence spans 127 residues: Fluoride-specific ion channel FluC 1 (127 aa).

The next 4 helical transmembrane spans lie at 3–23 (LLIV…VGQW), 35–55 (IAML…FGLY), 74–94 (IGFF…VLLI), and 102–122 (LFSY…LGFY). Positions 78 and 81 each coordinate Na(+).

The protein belongs to the fluoride channel Fluc/FEX (TC 1.A.43) family.

It localises to the cell membrane. The catalysed reaction is fluoride(in) = fluoride(out). Its activity is regulated as follows. Na(+) is not transported, but it plays an essential structural role and its presence is essential for fluoride channel function. Fluoride-specific ion channel. Important for reducing fluoride concentration in the cell, thus reducing its toxicity. The polypeptide is Fluoride-specific ion channel FluC 1 (Halalkalibacterium halodurans (strain ATCC BAA-125 / DSM 18197 / FERM 7344 / JCM 9153 / C-125) (Bacillus halodurans)).